Consider the following 335-residue polypeptide: Phosphate acyltransferase (335 aa).

Belongs to the PlsX family. As to quaternary structure, homodimer. Probably interacts with PlsY.

It localises to the cytoplasm. It catalyses the reaction a fatty acyl-[ACP] + phosphate = an acyl phosphate + holo-[ACP]. Its pathway is lipid metabolism; phospholipid metabolism. Its function is as follows. Catalyzes the reversible formation of acyl-phosphate (acyl-PO(4)) from acyl-[acyl-carrier-protein] (acyl-ACP). This enzyme utilizes acyl-ACP as fatty acyl donor, but not acyl-CoA. The sequence is that of Phosphate acyltransferase from Streptococcus pyogenes serotype M18 (strain MGAS8232).